Reading from the N-terminus, the 147-residue chain is Hemoglobin subunit epsilon (147 aa).

In terms of domain architecture, Globin spans His-3 to His-147. 2 positions are modified to phosphoserine: Ser-14 and Ser-51. Heme b-binding residues include His-64 and His-93.

Belongs to the globin family. Red blood cells.

In terms of biological role, hemoglobin epsilon chain is an embryonic-type beta-type chain found in prenatal and neonatal marsupials. In Notamacropus eugenii (Tammar wallaby), this protein is Hemoglobin subunit epsilon (HBE1).